A 402-amino-acid polypeptide reads, in one-letter code: 1-deoxy-D-xylulose 5-phosphate reductoisomerase (402 aa).

Positions 13, 14, 15, 16, and 126 each coordinate NADPH. Lys127 contacts 1-deoxy-D-xylulose 5-phosphate. Glu128 contacts NADPH. Asp152 serves as a coordination point for Mn(2+). Residues Ser153, Glu154, Ser188, and His211 each contribute to the 1-deoxy-D-xylulose 5-phosphate site. Position 154 (Glu154) interacts with Mn(2+). Gly217 is a binding site for NADPH. Residues Ser224, Asn229, Lys230, and Glu233 each contribute to the 1-deoxy-D-xylulose 5-phosphate site. Mn(2+) is bound at residue Glu233.

The protein belongs to the DXR family. Requires Mg(2+) as cofactor. Mn(2+) is required as a cofactor.

It catalyses the reaction 2-C-methyl-D-erythritol 4-phosphate + NADP(+) = 1-deoxy-D-xylulose 5-phosphate + NADPH + H(+). The protein operates within isoprenoid biosynthesis; isopentenyl diphosphate biosynthesis via DXP pathway; isopentenyl diphosphate from 1-deoxy-D-xylulose 5-phosphate: step 1/6. Functionally, catalyzes the NADPH-dependent rearrangement and reduction of 1-deoxy-D-xylulose-5-phosphate (DXP) to 2-C-methyl-D-erythritol 4-phosphate (MEP). The sequence is that of 1-deoxy-D-xylulose 5-phosphate reductoisomerase from Psychrobacter arcticus (strain DSM 17307 / VKM B-2377 / 273-4).